A 231-amino-acid chain; its full sequence is Cilia- and flagella-associated protein 299 (231 aa).

Its subcellular location is the cytoplasm. The protein resides in the nucleus. May be involved in spermatogenesis. The chain is Cilia- and flagella-associated protein 299 from Bos taurus (Bovine).